The primary structure comprises 475 residues: Methylenomycin A resistance protein (475 aa).

The next 14 membrane-spanning stretches (helical) occupy residues 28–48 (ITALATGFVMATLDVTVVNVA), 65–85 (WIVDGYVLTFASLLMLAGGLA), 93–113 (VYLWGMGVFFLASLACALAPT), 123–143 (VQGAGAALFMPSSLSLLVFSF), 152–172 (MLGLWSAIVATSSGLGPTVGG), 173–193 (LMVSAFGWESIFLLNLPIGAI), 212–232 (LAVPGHLLWIVALAAVSFALI), 240–260 (TAGPVLTAYAVAVTAAALLAL), 285–305 (LVGFLFNFALFGSTFMLGLYF), 314–334 (FQAGLELLPMTIFFPVANIVY), 346–366 (LLTAFLLLAGAASLSMVTITA), 371–391 (WVVAVAVGVANIGAGIISPGM), 416–436 (QIGSLVGIAAMGVVLHSTSDW), and 439–459 (GAAISFLAVGLAYLLGGLSAW).

Belongs to the major facilitator superfamily.

The protein resides in the cell membrane. Functionally, resistance to the epoxide antibiotic methylenomycin A; probably by mediating its efflux. In Streptomyces coelicolor (strain ATCC BAA-471 / A3(2) / M145), this protein is Methylenomycin A resistance protein (mmr).